A 432-amino-acid polypeptide reads, in one-letter code: MAGTGHTPEEALALLKRGAEEIVPEEELLAKLKEGRPLTVKLGADPTRPDLHLGHAVVLRKMRQFQELGHKVVLIIGDFTGMIGDPSGRSKTRPPLTLEETRENAKTYVAQAGKILRQEPHLFELRYNSEWLEGLTFKEVVRLTSLMTVAQMLEREDFKKRYEAGIPISLHELLYPFAQAYDSVAIRADVEMGGTDQRFNLLVGREVQRAYGQSPQVCFLMPLLVGLDGREKMSKSLDNYIGLTEPPEAMFKKLMRVPDPLLPSYFRLLTDLEEEEIEALLKAGPVPAHRVLARLLTAAYALPQIPPRIDRAFYESLGYAWEAFGRDKEAGPEEVRRAEARYDEVAKGGIPEEIPEVTIPASELKEGRIWVARLFTLAGLTPSNAEARRLIQNRGLRLDGEVLTDPMLQVDLSRPRILQRGKDRFVRVRLSD.

The 'HIGH' region signature appears at 46 to 55; the sequence is PTRPDLHLGH. The short motif at 232-236 is the 'KMSKS' region element; it reads KMSKS. An ATP-binding site is contributed by Lys-235. Residues 369–430 enclose the S4 RNA-binding domain; that stretch reads IWVARLFTLA…GKDRFVRVRL (62 aa).

This sequence belongs to the class-I aminoacyl-tRNA synthetase family. TyrS type 2 subfamily. In terms of assembly, homodimer.

The protein resides in the cytoplasm. It catalyses the reaction tRNA(Tyr) + L-tyrosine + ATP = L-tyrosyl-tRNA(Tyr) + AMP + diphosphate + H(+). Its function is as follows. Catalyzes the attachment of tyrosine to tRNA(Tyr) in a two-step reaction: tyrosine is first activated by ATP to form Tyr-AMP and then transferred to the acceptor end of tRNA(Tyr). The polypeptide is Tyrosine--tRNA ligase (Thermus thermophilus (strain ATCC BAA-163 / DSM 7039 / HB27)).